Reading from the N-terminus, the 179-residue chain is Peptide deformylase 2 (179 aa).

Positions 104 and 146 each coordinate Fe cation. Glu147 is an active-site residue. His150 contributes to the Fe cation binding site.

It belongs to the polypeptide deformylase family. It depends on Fe(2+) as a cofactor.

It catalyses the reaction N-terminal N-formyl-L-methionyl-[peptide] + H2O = N-terminal L-methionyl-[peptide] + formate. Removes the formyl group from the N-terminal Met of newly synthesized proteins. Requires at least a dipeptide for an efficient rate of reaction. N-terminal L-methionine is a prerequisite for activity but the enzyme has broad specificity at other positions. This Streptomyces coelicolor (strain ATCC BAA-471 / A3(2) / M145) protein is Peptide deformylase 2.